We begin with the raw amino-acid sequence, 613 residues long: Dihydroxy-acid dehydratase (613 aa).

A Mg(2+)-binding site is contributed by Asp-81. Cys-122 contributes to the [2Fe-2S] cluster binding site. The Mg(2+) site is built by Asp-123 and Lys-124. An N6-carboxylysine modification is found at Lys-124. Cys-195 contacts [2Fe-2S] cluster. Glu-491 serves as a coordination point for Mg(2+). Ser-517 functions as the Proton acceptor in the catalytic mechanism.

This sequence belongs to the IlvD/Edd family. As to quaternary structure, homodimer. Requires [2Fe-2S] cluster as cofactor. Mg(2+) is required as a cofactor.

It catalyses the reaction (2R)-2,3-dihydroxy-3-methylbutanoate = 3-methyl-2-oxobutanoate + H2O. It carries out the reaction (2R,3R)-2,3-dihydroxy-3-methylpentanoate = (S)-3-methyl-2-oxopentanoate + H2O. It functions in the pathway amino-acid biosynthesis; L-isoleucine biosynthesis; L-isoleucine from 2-oxobutanoate: step 3/4. The protein operates within amino-acid biosynthesis; L-valine biosynthesis; L-valine from pyruvate: step 3/4. In terms of biological role, functions in the biosynthesis of branched-chain amino acids. Catalyzes the dehydration of (2R,3R)-2,3-dihydroxy-3-methylpentanoate (2,3-dihydroxy-3-methylvalerate) into 2-oxo-3-methylpentanoate (2-oxo-3-methylvalerate) and of (2R)-2,3-dihydroxy-3-methylbutanoate (2,3-dihydroxyisovalerate) into 2-oxo-3-methylbutanoate (2-oxoisovalerate), the penultimate precursor to L-isoleucine and L-valine, respectively. This is Dihydroxy-acid dehydratase from Aliivibrio fischeri (strain ATCC 700601 / ES114) (Vibrio fischeri).